Here is a 347-residue protein sequence, read N- to C-terminus: DNA primase small subunit PriS (347 aa).

Catalysis depends on residues aspartate 95 and aspartate 97. Zn(2+)-binding residues include cysteine 106, histidine 108, cysteine 114, and cysteine 117. The Zinc knuckle motif signature appears at 106-117 (CNHEPGTVCPIC). Aspartate 280 is a catalytic residue.

The protein belongs to the eukaryotic-type primase small subunit family. As to quaternary structure, heterodimer of a small subunit (PriS) and a large subunit (PriL). Both participate in formation of the active center, but the ATP-binding site is exclusively located on the small subunit. It depends on Mg(2+) as a cofactor. Mn(2+) serves as cofactor.

Functionally, catalytic subunit of DNA primase, an RNA polymerase that catalyzes the synthesis of short RNA molecules used as primers for DNA polymerase during DNA replication. The small subunit contains the primase catalytic core and has DNA synthesis activity on its own. Binding to the large subunit stabilizes and modulates the activity, increasing the rate of DNA synthesis while decreasing the length of the DNA fragments, and conferring RNA synthesis capability. The DNA polymerase activity may enable DNA primase to also catalyze primer extension after primer synthesis. May also play a role in DNA repair. The protein is DNA primase small subunit PriS of Pyrococcus furiosus (strain ATCC 43587 / DSM 3638 / JCM 8422 / Vc1).